The primary structure comprises 213 residues: Histone H1 (213 aa).

Residues 1–25 are compositionally biased toward low complexity; it reads MAAATASAAATPAKKAAPKKPAAAP. Disordered regions lie at residues 1 to 30 and 81 to 213; these read MAAA…HPSY and GEFV…AKSS. The region spanning 26–97 is the H15 domain; the sequence is EHPSYKEMLT…GPSGTVKLAK (72 aa). 4 stretches are compositionally biased toward low complexity: residues 102 to 113, 123 to 137, 157 to 176, and 203 to 213; these read AAAPKKPAAKKA, KKAA…PKSA, KKAA…APVK, and PKKAATPAKSS.

It belongs to the histone H1/H5 family.

It is found in the nucleus. It localises to the chromosome. Its function is as follows. Could act as an H1-type linker histone. This chain is Histone H1, found in Ascobolus immersus.